Consider the following 242-residue polypeptide: Probable porphobilinogen deaminase (242 aa).

The protein belongs to the HMBS family.

It carries out the reaction 4 porphobilinogen + H2O = hydroxymethylbilane + 4 NH4(+). The protein operates within porphyrin-containing compound metabolism; protoporphyrin-IX biosynthesis; coproporphyrinogen-III from 5-aminolevulinate: step 2/4. In terms of biological role, tetrapolymerization of the monopyrrole PBG into the hydroxymethylbilane pre-uroporphyrinogen in several discrete steps. The protein is Probable porphobilinogen deaminase (hemC) of Chlamydia muridarum (strain MoPn / Nigg).